A 332-amino-acid chain; its full sequence is Ribose-phosphate pyrophosphokinase (332 aa).

Residue 55-57 coordinates ATP; the sequence is DGE. Histidine 148 and aspartate 187 together coordinate Mg(2+). Lysine 211 is an active-site residue. D-ribose 5-phosphate is bound by residues arginine 213, aspartate 237, and 241–245; that span reads DTGGT.

It belongs to the ribose-phosphate pyrophosphokinase family. Class I subfamily. In terms of assembly, homohexamer. Mg(2+) serves as cofactor.

It is found in the cytoplasm. It carries out the reaction D-ribose 5-phosphate + ATP = 5-phospho-alpha-D-ribose 1-diphosphate + AMP + H(+). It participates in metabolic intermediate biosynthesis; 5-phospho-alpha-D-ribose 1-diphosphate biosynthesis; 5-phospho-alpha-D-ribose 1-diphosphate from D-ribose 5-phosphate (route I): step 1/1. Involved in the biosynthesis of the central metabolite phospho-alpha-D-ribosyl-1-pyrophosphate (PRPP) via the transfer of pyrophosphoryl group from ATP to 1-hydroxyl of ribose-5-phosphate (Rib-5-P). This Prochlorococcus marinus (strain MIT 9313) protein is Ribose-phosphate pyrophosphokinase.